Reading from the N-terminus, the 542-residue chain is Tripartite motif-containing protein 26 (542 aa).

The segment at 16 to 57 adopts an RING-type zinc-finger fold; that stretch reads CSICLDYLRDPVTIDCGHVFCRSCTSDIRPISGNRPVCPLCK. The B box-type zinc finger occupies 97 to 138; the sequence is QDMKLCERHQEKLHYYCEDDGKLLCVMCRESREHRPHTAVLV. Residues Cys-102, His-105, Cys-124, and His-130 each coordinate Zn(2+). A coiled-coil region spans residues 197–243; it reads QFLKKREQHLLDQLATLEQLLTEGREKFKTRGVSELDRLTLVISELE. The B30.2/SPRY domain maps to 298-542; sequence RGLRQFQGKL…WPEARLLLRP (245 aa). The segment at 379-440 is disordered; the sequence is REGWSEDEEE…EEEEEVQESC (62 aa). 2 stretches are compositionally biased toward acidic residues: residues 383 to 405 and 413 to 437; these read SEDE…EEPG and WETD…EEVQ. The stretch at 411 to 440 forms a coiled coil; sequence EDWETDEEDESLGEEEEEEEEEEEEVQESC.

Belongs to the TRIM/RBCC family. Interacts with TBK1; this interaction bridges together TBK1 and NEMO in order to activate TBK1. Interacts with INCA1. Post-translationally, autoubiquitinates upon viral infection. In turn, autoubiquitinated TRIM26 recruits NEMO and bridges TBK1-NEMO interaction.

Its subcellular location is the cytoplasm. The protein resides in the nucleus. The catalysed reaction is S-ubiquitinyl-[E2 ubiquitin-conjugating enzyme]-L-cysteine + [acceptor protein]-L-lysine = [E2 ubiquitin-conjugating enzyme]-L-cysteine + N(6)-ubiquitinyl-[acceptor protein]-L-lysine.. Its function is as follows. E3 ubiquitin-protein ligase which regulates the IFN-beta production and antiviral response downstream of various DNA-encoded pattern-recognition receptors (PRRs). Also plays a central role in determining the response to different forms of oxidative stress by controlling levels of DNA glycosylases NEIL1, NEIL3 and NTH1 that are involved in repair of damaged DNA. Promotes nuclear IRF3 ubiquitination and proteasomal degradation. Bridges together TBK1 and NEMO during the innate response to viral infection leading to the activation of TBK1. Positively regulates LPS-mediated inflammatory innate immune response by catalyzing the 'Lys-11'-linked polyubiquitination of TAB1 to enhance its activation and subsequent NF-kappa-B and MAPK signaling. In a manner independent of its catalytic activity, inhibits WWP2, a SOX2-directed E3 ubiquitin ligase, and thus protects SOX2 from polyubiquitination and proteasomal degradation. Ubiquitinates the histone acetyltransferase protein complex component PHF20 and thereby triggers its degradation in the nucleus after its recruitment by the histone demethylase KDM6B, serving as a scaffold protein. Upon induction by TGF-beta, ubiquitinates the TFIID component TAF7 for proteasomal degradation. Induces ferroptosis by ubiquitinating SLC7A11, a critical protein for lipid reactive oxygen species (ROS) scavenging. This Rattus norvegicus (Rat) protein is Tripartite motif-containing protein 26 (Trim26).